A 392-amino-acid polypeptide reads, in one-letter code: Heat-inducible transcription repressor HrcA (392 aa).

The protein belongs to the HrcA family.

Its function is as follows. Negative regulator of class I heat shock genes (grpE-dnaK-dnaJ and groELS operons). Prevents heat-shock induction of these operons. This is Heat-inducible transcription repressor HrcA from Chlamydia muridarum (strain MoPn / Nigg).